We begin with the raw amino-acid sequence, 294 residues long: Nucleoside-specific channel-forming protein Tsx (294 aa).

A signal peptide spans 1 to 22 (MKKTLLAAGAVLALSSSFTVNA).

This sequence belongs to the nucleoside-specific channel-forming outer membrane porin (Tsx) (TC 1.B.10) family.

The protein localises to the cell outer membrane. Functionally, functions as a substrate-specific channel for nucleosides and deoxynucleosides. The protein is Nucleoside-specific channel-forming protein Tsx (tsx) of Escherichia coli O157:H7.